Here is a 1436-residue protein sequence, read N- to C-terminus: Probable ATP-dependent RNA helicase spindle-E (1436 aa).

The region spanning 124–291 is the Helicase ATP-binding domain; sequence LAAINANPVV…FTTTNSIPPV (168 aa). 137 to 144 serves as a coordination point for ATP; the sequence is GETGCGKT. Positions 237-240 match the DEAH box motif; it reads DEVH. In terms of domain architecture, Helicase C-terminal spans 337-524; the sequence is KIIMVIDNME…NSVLRAKELE (188 aa). In terms of domain architecture, Tudor spans 940–1003; that stretch reads ACDISKGMMV…RFMSEELIQQ (64 aa).

The protein belongs to the DEAD box helicase family. DEAH subfamily.

Its subcellular location is the cytoplasm. The enzyme catalyses ATP + H2O = ADP + phosphate + H(+). In terms of biological role, probable ATP-binding RNA helicase which plays a central role during spermatogenesis and oogenesis by repressing transposable elements and preventing their mobilization, which is essential for the germline integrity. Acts via the piRNA metabolic process, which mediates the repression of transposable elements during meiosis by forming complexes composed of piRNAs and Piwi and govern the methylation and subsequent repression of transposons. Involved in the repression of LTR retrotransposon copia. Also involved in telomere regulation by repressing specialized telomeric retroelements HeT-A, TAHRE, and TART; Drosophila telomeres being maintained by transposition of specialized telomeric retroelements. Involved in telomeric trans-silencing, a repression mechanism by which a transposon or a transgene inserted in subtelomeric heterochromatin has the capacity to repress in trans in the female germline, a homologous transposon, or transgene located in euchromatin. Involved in the repression of testis-expressed Stellate genes by the homologous Su(Ste) repeats. Required for anteroposterior and dorsoventral axis formation during oogenesis. The polypeptide is Probable ATP-dependent RNA helicase spindle-E (spn-E) (Drosophila yakuba (Fruit fly)).